The primary structure comprises 420 residues: F-box protein At5g07610 (420 aa).

Positions 1-25 are disordered; that stretch reads MSSCSRTRTKAPRSARSRRNGGFSS. A compositionally biased stretch (basic residues) spans 7–19; the sequence is TRTKAPRSARSRR. Residues 27-77 form the F-box domain; it reads SATIVADIDDVLIQILSFLPIKTLLRFKRVSKRWLSLITNPVFSNRVIKSN.

This Arabidopsis thaliana (Mouse-ear cress) protein is F-box protein At5g07610.